Consider the following 242-residue polypeptide: MKTFHGPTCGTAVSLCLLLFLTSALEEGEITSKVKFPPSSSPSFPRLVMVGTLPDLQEITLCYWFKVNCLKGTLHMFSYATAKKDNELLTLLDEQGDFLFNVHGAPQLKVQCPNKIHIGKWHHVCHTWSSWEGEATIAVDGFHCKGNATGIAVGRTLSQGGLVVLGQDQDSVGGKFDATQSLEGELSELNLWNTVLNHEQIKYLSKCAHPSERHIYGNIIQWDKTQFKAYDGVVLSPNEICA.

An N-terminal signal peptide occupies residues 1–24 (MKTFHGPTCGTAVSLCLLLFLTSA). Positions 30–241 (ITSKVKFPPS…GVVLSPNEIC (212 aa)) constitute a Pentraxin (PTX) domain. Phosphocholine contacts are provided by Thr60 and Tyr63. 2 disulfide bridges follow: Cys62/Cys125 and Cys112/Cys144. Ca(2+)-binding residues include Asp85 and Asn86. An N-linked (GlcNAc...) asparagine glycan is attached at Asn147. Ca(2+)-binding residues include Gln169, Asp170, and Gln180. A disulfide bridge connects residues Cys207 and Cys241.

It belongs to the pentraxin family. As to quaternary structure, homopentamer. Pentraxin (or pentaxin) have a discoid arrangement of 5 non-covalently bound subunits. The cofactor is Ca(2+).

The protein resides in the secreted. Functionally, might serve the role of immunoglobulins. This chain is C-reactive protein 3.3, found in Limulus polyphemus (Atlantic horseshoe crab).